The primary structure comprises 85 residues: Large ribosomal subunit protein bL27 (85 aa).

Belongs to the bacterial ribosomal protein bL27 family.

This Azobacteroides pseudotrichonymphae genomovar. CFP2 protein is Large ribosomal subunit protein bL27.